The following is a 1121-amino-acid chain: Piwi-like protein ergo-1 (1121 aa).

A compositionally biased stretch (gly residues) spans 1 to 14 (MSYNNGGGGGGGGY). The tract at residues 1 to 134 (MSYNNGGGGG…GNRGGGGGRV (134 aa)) is disordered. Composition is skewed to basic and acidic residues over residues 15–29 (RNDR…DRQN) and 40–77 (YNDD…DRRG). Positions 99-112 (GSNQRNDNYGNNRG) are enriched in polar residues. Residues 125–134 (GNRGGGGGRV) are compositionally biased toward gly residues. The PAZ domain maps to 426-534 (VMTQILTKMT…MPLELVSYIV (109 aa)). Positions 774–1081 (NVLKYLADNK…AAKRAKETLD (308 aa)) constitute a Piwi domain.

Belongs to the argonaute family. Piwi subfamily. Interacts with rde-12. Interacts with rde-10. Highly expressed in the germline in hermaphrodites.

It localises to the cytoplasm. Argonaute protein required for gene silencing in the endogenous RNA interference (RNAi) pathway. Involved in the 26G RNAi pathway and associates with both unmethylated and methylated 26G small interfering RNAs (26G-siRNAs), which are a class of 26 nucleotide siRNAs that possess a guanine residue at the 5'-end. Associated 26G-siRNAs are methylated by the methyltransferase henn-1, which stabilizes the siRNAs. Association with 26G-siRNAs is required for the biogenesis of secondary 22G-siRNAs (a class of 22 nucleotide siRNAs that possess a triphosphorylated guanine residue at the 5'-end). May be involved in passenger strand cleavage of target 26G-siRNAs. The protein is Piwi-like protein ergo-1 of Caenorhabditis elegans.